A 184-amino-acid chain; its full sequence is Ras-related protein Rap1 (184 aa).

Residue 10–17 (GSGGVGKS) coordinates GTP. The Effector region signature appears at 32-40 (YDPTIEDSY). GTP-binding positions include 57-61 (DTAGT) and 116-119 (NKCD). C181 carries the post-translational modification Cysteine methyl ester. Residue C181 is the site of S-geranylgeranyl cysteine attachment. Positions 182 to 184 (VLL) are cleaved as a propeptide — removed in mature form.

Belongs to the small GTPase superfamily. Ras family.

The protein resides in the cell membrane. It catalyses the reaction GTP + H2O = GDP + phosphate + H(+). Alternates between an inactive form bound to GDP and an active form bound to GTP. Activated by a guanine nucleotide-exchange factor (GEF) and inactivated by a GTPase-activating protein (GAP). In terms of biological role, ras proteins bind GDP/GTP and possess intrinsic GTPase activity. Plays a role in photoreceptor cell determination. This is Ras-related protein Rap1 from Drosophila melanogaster (Fruit fly).